The following is a 383-amino-acid chain: DNA-directed RNA polymerase subunit alpha (383 aa).

Residues Met-1–Leu-240 form an alpha N-terminal domain (alpha-NTD) region. The segment at Ile-306 to Lys-383 is alpha C-terminal domain (alpha-CTD).

This sequence belongs to the RNA polymerase alpha chain family. In plastids the minimal PEP RNA polymerase catalytic core is composed of four subunits: alpha, beta, beta', and beta''. When a (nuclear-encoded) sigma factor is associated with the core the holoenzyme is formed, which can initiate transcription.

The protein resides in the plastid. The protein localises to the chloroplast. It catalyses the reaction RNA(n) + a ribonucleoside 5'-triphosphate = RNA(n+1) + diphosphate. DNA-dependent RNA polymerase catalyzes the transcription of DNA into RNA using the four ribonucleoside triphosphates as substrates. This chain is DNA-directed RNA polymerase subunit alpha, found in Staurastrum punctulatum (Green alga).